We begin with the raw amino-acid sequence, 272 residues long: Shikimate dehydrogenase (NADP(+)) (272 aa).

Residues 20 to 22 (TMS) and T67 contribute to the shikimate site. K71 serves as the catalytic Proton acceptor. E83 lines the NADP(+) pocket. Residues N92 and D107 each coordinate shikimate. NADP(+) is bound by residues 129-133 (GAGGA), 153-158 (NRTKSK), and L216. Residue Y218 participates in shikimate binding. G239 lines the NADP(+) pocket.

Belongs to the shikimate dehydrogenase family. As to quaternary structure, homodimer.

The enzyme catalyses shikimate + NADP(+) = 3-dehydroshikimate + NADPH + H(+). Its pathway is metabolic intermediate biosynthesis; chorismate biosynthesis; chorismate from D-erythrose 4-phosphate and phosphoenolpyruvate: step 4/7. Involved in the biosynthesis of the chorismate, which leads to the biosynthesis of aromatic amino acids. Catalyzes the reversible NADPH linked reduction of 3-dehydroshikimate (DHSA) to yield shikimate (SA). This chain is Shikimate dehydrogenase (NADP(+)), found in Maridesulfovibrio salexigens (strain ATCC 14822 / DSM 2638 / NCIMB 8403 / VKM B-1763) (Desulfovibrio salexigens).